We begin with the raw amino-acid sequence, 161 residues long: UPF0178 protein BOV_1904 (161 aa).

Belongs to the UPF0178 family.

In Brucella ovis (strain ATCC 25840 / 63/290 / NCTC 10512), this protein is UPF0178 protein BOV_1904.